A 1190-amino-acid chain; its full sequence is Pumilio homolog 1 (1190 aa).

Disordered stretches follow at residues 38 to 74, 491 to 531, 611 to 675, and 744 to 777; these read LTSG…GVAG, SNSA…QQTD, ANGP…NSSL, and GPVG…LNLG. Composition is skewed to low complexity over residues 491–508, 518–531, 628–675, and 765–777; these read SNSA…GQQQ, PLTP…QQTD, QQPQ…NSSL, and LSSH…LNLG. In terms of domain architecture, PUM-HD spans 830-1172; the sequence is GRSRLLEDFR…HILAKLEKYY (343 aa). Pumilio repeat units follow at residues 850-885, 886-921, 922-959, 960-995, 996-1031, 1032-1067, 1068-1103, and 1107-1146; these read EIAG…LVFN, EILQ…ALAE, RIRG…EMVR, ELDG…FIID, AFKS…PILE, ELHQ…KIVA, EIRG…MLID, and TMND…IVMH. Positions 865 to 869 are adenine-nucleotide binding in RNA target; that stretch reads SRFIQ. Positions 901–905 are uracil-nucleotide binding in RNA target; the sequence is NYVIQ. An adenine-nucleotide binding in RNA target region spans residues 937-941; the sequence is CRVIQ. Residues 975–979 are non-specific-nucleotide binding in RNA target; it reads NHVVQ. The segment at 1011 to 1015 is adenine-nucleotide binding in RNA target; the sequence is CRVIQ. The uracil-nucleotide binding in RNA target stretch occupies residues 1047-1051; sequence NYVIQ. Positions 1083 to 1087 are guanine-nucleotide binding in RNA target; that stretch reads SNVVE. The tract at residues 1126–1130 is uracil-nucleotide binding in RNA target; sequence NYVVQ.

In terms of assembly, interacts with cpeb1-a; interacts with unphosphorylated cpeb1-a but not phosphorylated. Component of a complex with papd4, sympk, tacc3, parn, dazl and cpeb1. Phosphorylated. Phosphorylation takes place at the time of dissociation of cpeb1-a from pum1 and the translational activation of ccnb1 mRNA. As to expression, present in oocytes (at protein level).

The protein localises to the cytoplasm. Its subcellular location is the P-body. The protein resides in the cytoplasmic granule. Its function is as follows. Sequence-specific RNA-binding protein that acts as a post-transcriptional repressor by binding the 3'-UTR of mRNA targets. Binds to an RNA consensus sequence, the Pumilio Response Element (PRE), 5'-UGUANAUA-3', that is related to the Nanos Response Element (NRE). Mediates post-transcriptional repression of transcripts via different mechanisms: acts via direct recruitment of deadenylase complexes leading to translational inhibition and mRNA degradation. Also mediates deadenylation-independent repression by promoting accessibility of miRNAs. Acts as a post-transcriptional repressor of ccnb1 mRNA during oocyte maturation. This is Pumilio homolog 1 from Xenopus laevis (African clawed frog).